The chain runs to 192 residues: Cysteine and glycine-rich protein 1 (192 aa).

One can recognise an LIM zinc-binding 1 domain in the interval C10–C61. The short motif at K64–K69 is the Nuclear localization signal element. The region spanning C118–C169 is the LIM zinc-binding 2 domain.

Probable monomer. Interacts with ZYX. In terms of tissue distribution, most prominent in tissues that are enriched in smooth muscle cells, such as gizzard, stomach, and intestine. Lower level in the heart, no expression in liver, skeletal muscle, or brain.

The protein localises to the nucleus. The protein resides in the cytoplasm. Its subcellular location is the cytoskeleton. Its function is as follows. Heat stable protein, that interacts with zyxin/ZYX. May be a component of a signal transduction pathway that mediates adhesion-stimulated changes in gene expression. The sequence is that of Cysteine and glycine-rich protein 1 (CSRP1) from Gallus gallus (Chicken).